Consider the following 105-residue polypeptide: Large ribosomal subunit protein uL23 (105 aa).

Belongs to the universal ribosomal protein uL23 family. In terms of assembly, part of the 50S ribosomal subunit. Contacts protein L29, and trigger factor when it is bound to the ribosome.

In terms of biological role, one of the early assembly proteins it binds 23S rRNA. One of the proteins that surrounds the polypeptide exit tunnel on the outside of the ribosome. Forms the main docking site for trigger factor binding to the ribosome. In Herminiimonas arsenicoxydans, this protein is Large ribosomal subunit protein uL23.